Here is a 239-residue protein sequence, read N- to C-terminus: Transcriptional regulatory protein BtsR (239 aa).

The region spanning 3-116 (KVLIVDDEPL…RLEKTLHRLR (114 aa)) is the Response regulatory domain. Position 54 is a 4-aspartylphosphate (Asp-54). Residues 137-239 (IPCTGHSRIY…LKSLKEAIGL (103 aa)) enclose the HTH LytTR-type domain.

Phosphorylated by BtsS.

Member of the two-component regulatory system BtsS/BtsR. BtsR regulates expression of btsT by binding to its promoter region. This is Transcriptional regulatory protein BtsR from Salmonella typhimurium (strain LT2 / SGSC1412 / ATCC 700720).